Reading from the N-terminus, the 1650-residue chain is HEAT repeat-containing protein 1 homolog (1650 aa).

The tract at residues 1183-1210 (QYDSAASPGSSVAGGRGNRGHRIRQQSL) is disordered. The HEAT repeat unit spans residues 1609 to 1645 (LLPFLNELIEDENKQVEAQCQKVINSLQHKFGETFWS).

The protein belongs to the HEATR1/UTP10 family.

The protein localises to the nucleus. It localises to the nucleolus. Its function is as follows. Involved in nucleolar processing of pre-18S ribosomal RNA. Involved in ribosome biosynthesis. This chain is HEAT repeat-containing protein 1 homolog (toe-1), found in Caenorhabditis elegans.